The sequence spans 480 residues: V-type ATP synthase beta chain 2 (480 aa).

Belongs to the ATPase alpha/beta chains family.

Its function is as follows. Produces ATP from ADP in the presence of a proton gradient across the membrane. The V-type beta chain is a regulatory subunit. The chain is V-type ATP synthase beta chain 2 (atpB2) from Treponema pallidum (strain Nichols).